Reading from the N-terminus, the 161-residue chain is uncharacterized protein (161 aa).

This is an uncharacterized protein from Saccharomyces cerevisiae (strain ATCC 204508 / S288c) (Baker's yeast).